The sequence spans 780 residues: ATP-dependent 6-phosphofructokinase, muscle type (780 aa).

Position 2 is an N-acetylthreonine (T2). The N-terminal catalytic PFK domain 1 stretch occupies residues T2–H390. ATP contacts are provided by residues G25, R88–C89, and G118–S121. D119 lines the Mg(2+) pocket. Substrate contacts are provided by residues S164–D166, R201, M208–R210, E264, R292, and H298–R301. The active-site Proton acceptor is the D166. At S377 the chain carries Phosphoserine. Residues V391 to Y401 are interdomain linker. A C-terminal regulatory PFK domain 2 region spans residues T402 to I780. Residues R471 and T528–N532 contribute to the beta-D-fructose 2,6-bisphosphate site. The O-linked (GlcNAc) serine glycan is linked to S530. At K557 the chain carries N6-(2-hydroxyisobutyryl)lysine. Beta-D-fructose 2,6-bisphosphate contacts are provided by residues R566, M573 to G575, E629, R655, and H661 to Q664. S667 is modified (phosphoserine). Residue R735 participates in beta-D-fructose 2,6-bisphosphate binding. S775 bears the Phosphoserine mark.

Belongs to the phosphofructokinase type A (PFKA) family. ATP-dependent PFK group I subfamily. Eukaryotic two domain clade 'E' sub-subfamily. In terms of assembly, homo- and heterotetramers. Phosphofructokinase (PFK) enzyme functions as a tetramer composed of different combinations of 3 types of subunits, called PFKM (M), PFKL (L) and PFKP (P). The composition of the PFK tetramer differs according to the tissue type it is present in. The kinetic and regulatory properties of the tetrameric enzyme are dependent on the subunit composition, hence can vary across tissues. Interacts (via C-terminus) with HK1 (via N-terminal spermatogenic cell-specific region). The cofactor is Mg(2+). In terms of processing, glcNAcylation decreases enzyme activity.

Its subcellular location is the cytoplasm. The enzyme catalyses beta-D-fructose 6-phosphate + ATP = beta-D-fructose 1,6-bisphosphate + ADP + H(+). The protein operates within carbohydrate degradation; glycolysis; D-glyceraldehyde 3-phosphate and glycerone phosphate from D-glucose: step 3/4. Its activity is regulated as follows. Allosterically activated by ADP, AMP, or fructose 2,6-bisphosphate, and allosterically inhibited by ATP or citrate. Its function is as follows. Catalyzes the phosphorylation of D-fructose 6-phosphate to fructose 1,6-bisphosphate by ATP, the first committing step of glycolysis. The protein is ATP-dependent 6-phosphofructokinase, muscle type (PFKM) of Sus scrofa (Pig).